We begin with the raw amino-acid sequence, 98 residues long: Large ribosomal subunit protein bL25 (98 aa).

The tract at residues 1 to 23 (MANFVLNAQARAEDKQGKGASRR) is disordered.

The protein belongs to the bacterial ribosomal protein bL25 family. Part of the 50S ribosomal subunit; part of the 5S rRNA/L5/L18/L25 subcomplex. Contacts the 5S rRNA. Binds to the 5S rRNA independently of L5 and L18.

This is one of the proteins that binds to the 5S RNA in the ribosome where it forms part of the central protuberance. This chain is Large ribosomal subunit protein bL25, found in Acinetobacter baumannii (strain ATCC 17978 / DSM 105126 / CIP 53.77 / LMG 1025 / NCDC KC755 / 5377).